A 193-amino-acid chain; its full sequence is Naphthalene 1,2-dioxygenase system, small oxygenase component (193 aa).

The protein belongs to the bacterial ring-hydroxylating dioxygenase beta subunit family. As to quaternary structure, the naphthalene dioxygenase (NDO) multicomponent enzyme system is composed of an electron transfer component and a dioxygenase component (iron sulfur protein (ISP)). The electron transfer component is composed of a ferredoxin reductase (NdoR) and a ferredoxin (NdoA), and the dioxygenase component is formed of a heterohexamer (trimer of heterodimers) of three large alpha subunits (NdoB) and three small beta subunits (NdoC).

The protein operates within aromatic compound metabolism; naphthalene degradation. Functionally, component of the naphthalene dioxygenase (NDO) multicomponent enzyme system which catalyzes the incorporation of both atoms of molecular oxygen into naphthalene to form cis-(1R,2S)-dihydroxy-1,2-dihydronaphthalene. The beta subunit seems to have a structural role in the holoenzyme. In Pseudomonas aeruginosa, this protein is Naphthalene 1,2-dioxygenase system, small oxygenase component.